A 98-amino-acid chain; its full sequence is Sec-independent protein translocase protein TatA (98 aa).

The chain crosses the membrane as a helical span at residues methionine 1–glycine 21. The segment at valine 43–alanine 98 is disordered. Residues alanine 66 to proline 79 show a composition bias toward low complexity.

The protein belongs to the TatA/E family. The Tat system comprises two distinct complexes: a TatABC complex, containing multiple copies of TatA, TatB and TatC subunits, and a separate TatA complex, containing only TatA subunits. Substrates initially bind to the TatABC complex, which probably triggers association of the separate TatA complex to form the active translocon.

It localises to the cell membrane. Its function is as follows. Part of the twin-arginine translocation (Tat) system that transports large folded proteins containing a characteristic twin-arginine motif in their signal peptide across membranes. TatA could form the protein-conducting channel of the Tat system. The chain is Sec-independent protein translocase protein TatA from Rhodococcus erythropolis (Arthrobacter picolinophilus).